The sequence spans 362 residues: 2-aminoethylphosphonate--pyruvate transaminase (362 aa).

An N6-(pyridoxal phosphate)lysine modification is found at lysine 193.

This sequence belongs to the class-V pyridoxal-phosphate-dependent aminotransferase family. PhnW subfamily. Homodimer. The cofactor is pyridoxal 5'-phosphate.

It carries out the reaction (2-aminoethyl)phosphonate + pyruvate = phosphonoacetaldehyde + L-alanine. In terms of biological role, involved in phosphonate degradation. The protein is 2-aminoethylphosphonate--pyruvate transaminase of Phocaeicola vulgatus (strain ATCC 8482 / DSM 1447 / JCM 5826 / CCUG 4940 / NBRC 14291 / NCTC 11154) (Bacteroides vulgatus).